Reading from the N-terminus, the 341-residue chain is Phenylalanine--tRNA ligase alpha subunit (341 aa).

Mg(2+) is bound at residue E256.

The protein belongs to the class-II aminoacyl-tRNA synthetase family. Phe-tRNA synthetase alpha subunit type 1 subfamily. Tetramer of two alpha and two beta subunits. The cofactor is Mg(2+).

Its subcellular location is the cytoplasm. The catalysed reaction is tRNA(Phe) + L-phenylalanine + ATP = L-phenylalanyl-tRNA(Phe) + AMP + diphosphate + H(+). This Chlamydia felis (strain Fe/C-56) (Chlamydophila felis) protein is Phenylalanine--tRNA ligase alpha subunit.